The chain runs to 250 residues: Aquaporin (250 aa).

The Cytoplasmic portion of the chain corresponds to 1-15; sequence MTRETLKTLQSTFGE. A helical membrane pass occupies residues 16–36; the sequence is MVASFVFGFAVYSALLGSALT. The Extracellular segment spans residues 37 to 42; the sequence is EQSAAR. Residues 43–63 traverse the membrane as a helical segment; that stretch reads VIVGLTVGFSGICVIYSFCDV. Over 64–86 the chain is Cytoplasmic; it reads TVAHFNPAITLAAILTCKLGVLR. An NPA motif is present at residues 69 to 71; that stretch reads NPA. A helical membrane pass occupies residues 87–107; sequence GIGYIVAQYIGFILAVCALLP. At 108-133 the chain is on the extracellular side; the sequence is CSPVGYKETLNIIRPTPSPFGGDNLN. Residues 134–154 form a helical membrane-spanning segment; sequence VFFTEFFLTAILVHVAFATAV. At 155 to 179 the chain is on the cytoplasmic side; sequence NPYKPKTDTEGKFVDPDEEEPVDRR. Residues 180 to 200 traverse the membrane as a helical segment; that stretch reads ITAPLCIGLTLGFLAFLGLAS. At 201–224 the chain is on the extracellular side; that stretch reads SGGAFNPGLTLAPVIMSNTWNHFW. Positions 206-208 match the NPG motif; that stretch reads NPG. The helical transmembrane segment at 225–245 threads the bilayer; the sequence is AYFAGQYLGGFVGGLLQVLVL. The Cytoplasmic segment spans residues 246–250; it reads YKLSF.

It belongs to the MIP/aquaporin (TC 1.A.8) family.

Its subcellular location is the cell membrane. In terms of biological role, water channel required to facilitate the transport of water across membranes. Involved in osmotolerance. This chain is Aquaporin (AQP), found in Encephalitozoon cuniculi (strain GB-M1) (Microsporidian parasite).